The sequence spans 438 residues: Adenylyltransferase and sulfurtransferase MOCS3 (438 aa).

Residues G80, D101, 108–112 (TNLHR), K125, and 169–170 (DN) each bind ATP. The Zn(2+) site is built by C210 and C213. The active-site Glycyl thioester intermediate; for adenylyltransferase activity is the C227. Residues C285 and C288 each coordinate Zn(2+). A Rhodanese domain is found at 335–436 (SKQRHVLVDV…WTRNVDKEFP (102 aa)). C392 (cysteine persulfide intermediate; for sulfurtransferase activity) is an active-site residue.

This sequence in the N-terminal section; belongs to the HesA/MoeB/ThiF family. UBA4 subfamily. Requires Zn(2+) as cofactor.

It localises to the cytoplasm. Its subcellular location is the cytosol. It carries out the reaction [molybdopterin-synthase sulfur-carrier protein]-C-terminal Gly-Gly + ATP + H(+) = [molybdopterin-synthase sulfur-carrier protein]-C-terminal Gly-Gly-AMP + diphosphate. The enzyme catalyses [molybdopterin-synthase sulfur-carrier protein]-C-terminal Gly-Gly-AMP + S-sulfanyl-L-cysteinyl-[cysteine desulfurase] + AH2 = [molybdopterin-synthase sulfur-carrier protein]-C-terminal-Gly-aminoethanethioate + L-cysteinyl-[cysteine desulfurase] + A + AMP + 2 H(+). It participates in tRNA modification; 5-methoxycarbonylmethyl-2-thiouridine-tRNA biosynthesis. It functions in the pathway cofactor biosynthesis; molybdopterin biosynthesis. In terms of biological role, plays a central role in 2-thiolation of mcm(5)S(2)U at tRNA wobble positions of cytosolic tRNA(Lys), tRNA(Glu) and tRNA(Gln). Also essential during biosynthesis of the molybdenum cofactor. Acts by mediating the C-terminal thiocarboxylation of sulfur carriers URM1 and MOCS2A. Its N-terminus first activates URM1 and MOCS2A as acyl-adenylates (-COAMP), then the persulfide sulfur on the catalytic cysteine is transferred to URM1 and MOCS2A to form thiocarboxylation (-COSH) of their C-terminus. The reaction probably involves hydrogen sulfide that is generated from the persulfide intermediate and that acts as a nucleophile towards URM1 and MOCS2A. Subsequently, a transient disulfide bond is formed. Does not use thiosulfate as sulfur donor; NFS1 probably acting as a sulfur donor for thiocarboxylation reactions. The protein is Adenylyltransferase and sulfurtransferase MOCS3 of Culex quinquefasciatus (Southern house mosquito).